Reading from the N-terminus, the 2923-residue chain is Cadherin EGF LAG seven-pass G-type receptor 2 (2923 aa).

Residues 1-31 (MRSPATGVPLPTPPPPLLLLLLLLLPPPLLG) form the signal peptide. At 32–2380 (DQVGPCRSLG…GEILPLKTLT (2349 aa)) the chain is on the extracellular side. The tract at residues 154 to 198 (PGLRAGERSPEESLGGRRKRNVNTAPQFQPPSYQATVPENQPAGT) is disordered. The span at 158–168 (AGERSPEESLG) shows a compositional bias: basic and acidic residues. A compositionally biased stretch (polar residues) spans 175 to 196 (VNTAPQFQPPSYQATVPENQPA). Cadherin domains are found at residues 182-289 (QPPS…DPVF), 290-399 (EQQE…APQF), 400-505 (SEKR…APIF), 506-610 (VSTP…NPTF), 611-712 (TQPE…RPVF), 713-815 (QSSH…APQF), 816-921 (LRDS…PPVF), 922-1023 (EQDE…PPVL), and 1028-1146 (ILFN…SPLL). N-linked (GlcNAc...) asparagine glycosylation is found at Asn-486, Asn-557, and Asn-701. 4 N-linked (GlcNAc...) asparagine glycosylation sites follow: Asn-1036, Asn-1076, Asn-1182, and Asn-1212. In terms of domain architecture, EGF-like 1; calcium-binding spans 1228-1286 (DDNICLREPCENYMRCVSVLRFDSSAPFIASSSVLFRPIHPVGGLRCRCPPGFTGDYCE). Intrachain disulfides connect Cys-1232-Cys-1243, Cys-1237-Cys-1274, Cys-1276-Cys-1285, Cys-1292-Cys-1303, Cys-1297-Cys-1312, Cys-1314-Cys-1323, Cys-1332-Cys-1343, Cys-1337-Cys-1353, and Cys-1355-Cys-1365. One can recognise an EGF-like 2; calcium-binding domain in the interval 1288–1324 (EVDLCYSRPCGPHGRCRSREGGYTCLCRDGYTGEHCE). One can recognise an EGF-like 3; calcium-binding domain in the interval 1328–1366 (RSGRCTPGVCKNGGTCVNLLVGGFKCDCPSGDFEKPYCQ). The Laminin G-like 1 domain occupies 1367–1571 (VTTRSFPAHS…IANNGTVPGC (205 aa)). Asn-1501 and Asn-1565 each carry an N-linked (GlcNAc...) asparagine glycan. Disulfide bonds link Cys-1545–Cys-1571, Cys-1578–Cys-1589, Cys-1583–Cys-1598, and Cys-1600–Cys-1609. In terms of domain architecture, EGF-like 4; calcium-binding spans 1574-1610 (KKNVCDSNTCHNGGTCVNQWDAFSCECPLGFGGKSCA). Asn-1591 is subject to (3R)-3-hydroxyasparagine. Residues 1614–1791 (ANPQHFLGSS…GESINVEQGC (178 aa)) enclose the Laminin G-like 2 domain. A glycan (N-linked (GlcNAc...) asparagine) is linked at Asn-1741. Disulfide bonds link Cys-1761-Cys-1791, Cys-1797-Cys-1808, Cys-1802-Cys-1817, Cys-1819-Cys-1828, Cys-1832-Cys-1843, Cys-1837-Cys-1855, Cys-1857-Cys-1866, Cys-1887-Cys-1899, Cys-1889-Cys-1906, Cys-1908-Cys-1921, Cys-1924-Cys-1936, Cys-1926-Cys-1943, Cys-1945-Cys-1954, and Cys-1957-Cys-1969. Positions 1793 to 1828 (LPDPCDSNPCPANSYCSNDWDSYSCSCDPGYYGDNC) constitute an EGF-like 5; calcium-binding domain. (3R)-3-hydroxyasparagine is present on Asn-1810. Residue Asn-1827 is glycosylated (N-linked (GlcNAc...) asparagine). An EGF-like 6; calcium-binding domain is found at 1829 to 1867 (TNVCDLNPCEHQSVCTRKPSAPHGYTCECPPNYLGPYCE). Residues 1883–1922 (TCGPCNCDVSKGFDPDCNKTSGECHCKENHYRPPGSPTCL) enclose the EGF-like 7; calcium-binding domain. N-linked (GlcNAc...) asparagine glycosylation is present at Asn-1900. Residues 1924-1971 (CDCYPTGSLSRVCDPEDGQCPCKPGVIGRQCDRCDNPFAEVTTNGCEV) form the Laminin EGF-like domain. Asn-2024, Asn-2043, and Asn-2061 each carry an N-linked (GlcNAc...) asparagine glycan. The GAIN-B domain maps to 2199 to 2369 (ETTVILPESV…AVLMDVSRRE (171 aa)). A disordered region spans residues 2213–2238 (PPVVRPAGPGEAQEPEELARRQRRHP). Cystine bridges form between Cys-2319-Cys-2351 and Cys-2339-Cys-2353. The segment at 2319–2369 (CVFWNHSILVSGTGGWSARGCEVVFRNESHVSCQCNHMTSFAVLMDVSRRE) is GPS. 2 N-linked (GlcNAc...) asparagine glycosylation sites follow: Asn-2323 and Asn-2345. A helical membrane pass occupies residues 2381–2401 (YVALGVTLAALLLTFFFLTLL). Over 2402 to 2416 (RILRSNQHGIRRNLT) the chain is Cytoplasmic. A helical transmembrane segment spans residues 2417–2437 (AALGLAQLVFLLGINQADLPF). Residue Ala-2438 is a topological domain, extracellular. The helical transmembrane segment at 2439–2459 (CTVIAILLHFLYLCTFSWALL) threads the bilayer. Over 2460–2480 (EALHLYRALTEVRDVNTGPMR) the chain is Cytoplasmic. The helical transmembrane segment at 2481-2501 (FYYMLGWGVPAFITGLAVGLD) threads the bilayer. Topologically, residues 2502 to 2519 (PEGYGNPDFCWLSIYDTL) are extracellular. A helical transmembrane segment spans residues 2520-2540 (IWSFAGPVAFAVSMSVFLYIL). Topologically, residues 2541 to 2560 (AARASCAAQRQGFEKKGPVS) are cytoplasmic. The helical transmembrane segment at 2561–2581 (GLQPSFAVLLLLSATWLLALL) threads the bilayer. Over 2582 to 2591 (SVNSDTLLFH) the chain is Extracellular. A helical membrane pass occupies residues 2592–2612 (YLFATCNCIQGPFIFLSYVVL). Residues 2613 to 2923 (SKEVRKALKL…SEFLFFNFLH (311 aa)) lie on the Cytoplasmic side of the membrane. 2 disordered regions span residues 2688 to 2838 (SALN…HKGI) and 2854 to 2888 (LRLP…RQSL). 2 stretches are compositionally biased toward acidic residues: residues 2718-2730 (TDSD…EDDQ) and 2742-2753 (SEEEEEEEEEEA). Basic and acidic residues predominate over residues 2807–2819 (PEERLRENGDALS). The segment covering 2863–2873 (GSSRGSSASEG) has biased composition (low complexity).

This sequence belongs to the G-protein coupled receptor 2 family. LN-TM7 subfamily. Heterodimer of 2 chains generated by proteolytic processing; the large extracellular N-terminal fragment and the membrane-bound C-terminal fragment predominantly remain associated and non-covalently linked. The iron and 2-oxoglutarate dependent 3-hydroxylation of aspartate and asparagine is (R) stereospecific within EGF domains. In terms of processing, autoproteolytically processed at the GPS region of the GAIN-B domain; this cleavage modulates receptor activity. In terms of tissue distribution, highest expression in brain and testis.

Its subcellular location is the cell membrane. In terms of biological role, receptor that may have an important role in cell/cell signaling during nervous system formation. The chain is Cadherin EGF LAG seven-pass G-type receptor 2 from Homo sapiens (Human).